A 413-amino-acid chain; its full sequence is Hemolin (413 aa).

An N-terminal signal peptide occupies residues 1–18 (MVSKSIVALAACVAMCVA). 4 Ig-like C2-type domains span residues 25–112 (PVLK…HIIS), 121–215 (PTTF…LVGY), 233–322 (PMYV…VKLT), and 327–411 (PRFT…TLVI). Disulfide bonds link cysteine 46/cysteine 97, cysteine 141/cysteine 199, cysteine 252/cysteine 305, and cysteine 349/cysteine 395. N-linked (GlcNAc...) asparagine glycosylation is present at asparagine 283.

The protein belongs to the hemolin family. In terms of tissue distribution, hemolymph.

Its subcellular location is the secreted. In terms of biological role, insect-immune protein with antimicrobial activity. Forms a protein complex at the bacterial surface. Can inhibit hemocyte aggregation. This chain is Hemolin, found in Manduca sexta (Tobacco hawkmoth).